A 304-amino-acid polypeptide reads, in one-letter code: Ribosome-inactivating protein 9 (304 aa).

Glu208 is an active-site residue.

Belongs to the ribosome-inactivating protein family. Type 1 RIP subfamily. As to quaternary structure, monomer. As to expression, accumulates to high levels in seeds.

The protein resides in the cytoplasm. It catalyses the reaction Endohydrolysis of the N-glycosidic bond at one specific adenosine on the 28S rRNA.. Possesses features of some constitutive defense agent. The coordinate Opaque-2-controlled synthesis of this protein and the major seed storage proteins (zeins) may provide the germinating seedling with both nutritional benefits and protection against pathogen invasion of the surrounding endosperm. The chain is Ribosome-inactivating protein 9 (CRIP9) from Zea mays (Maize).